A 100-amino-acid chain; its full sequence is Urease subunit gamma (100 aa).

The protein belongs to the urease gamma subunit family. Heterotrimer of UreA (gamma), UreB (beta) and UreC (alpha) subunits. Three heterotrimers associate to form the active enzyme.

Its subcellular location is the cytoplasm. The enzyme catalyses urea + 2 H2O + H(+) = hydrogencarbonate + 2 NH4(+). It functions in the pathway nitrogen metabolism; urea degradation; CO(2) and NH(3) from urea (urease route): step 1/1. This is Urease subunit gamma from Marinomonas sp. (strain MWYL1).